Reading from the N-terminus, the 138-residue chain is Cysteine desulfuration protein SufE (138 aa).

The active-site Cysteine persulfide intermediate is Cys51.

This sequence belongs to the SufE family. In terms of assembly, homodimer. Interacts with SufS.

The protein localises to the cytoplasm. It participates in cofactor biosynthesis; iron-sulfur cluster biosynthesis. Its function is as follows. Participates in cysteine desulfuration mediated by SufS. Cysteine desulfuration mobilizes sulfur from L-cysteine to yield L-alanine and constitutes an essential step in sulfur metabolism for biosynthesis of a variety of sulfur-containing biomolecules. Functions as a sulfur acceptor for SufS, by mediating the direct transfer of the sulfur atom from the S-sulfanylcysteine of SufS, an intermediate product of cysteine desulfuration process. This Klebsiella pneumoniae (strain 342) protein is Cysteine desulfuration protein SufE.